Consider the following 155-residue polypeptide: Cytochrome c-type biogenesis protein CcmE (155 aa).

The Cytoplasmic portion of the chain corresponds to 1 to 8; sequence MNPIRKKR. A helical; Signal-anchor for type II membrane protein membrane pass occupies residues 9–29; it reads LYWILALLCGVSIAMALALSA. Residues 30-155 are Periplasmic-facing; sequence LQENINLFYT…PKRVKQESTR (126 aa). Residues His-124 and Tyr-128 each contribute to the heme site.

It belongs to the CcmE/CycJ family.

It localises to the cell inner membrane. Its function is as follows. Heme chaperone required for the biogenesis of c-type cytochromes. Transiently binds heme delivered by CcmC and transfers the heme to apo-cytochromes in a process facilitated by CcmF and CcmH. In Janthinobacterium sp. (strain Marseille) (Minibacterium massiliensis), this protein is Cytochrome c-type biogenesis protein CcmE.